Reading from the N-terminus, the 273-residue chain is Phosphatidylglycerol--prolipoprotein diacylglyceryl transferase (273 aa).

A run of 7 helical transmembrane segments spans residues 21-41, 60-80, 95-115, 124-144, 176-196, 203-223, and 237-257; these read VSVRWYGLMYLVGFMFALWLA, LLFAGFLGVVIGGRVGYVIFY, VWTGGMSFHGGLLGVITAMFW, FFGVADFVAPLVPFGLGMGRM, SQLYEMFLEGIVLFFILNWFI, GAVSGLFLAGYGTFRFLVEFV, and ISMGQILSSPMIILGILMMVW. R143 lines the a 1,2-diacyl-sn-glycero-3-phospho-(1'-sn-glycerol) pocket.

It belongs to the Lgt family.

The protein localises to the cell inner membrane. The catalysed reaction is L-cysteinyl-[prolipoprotein] + a 1,2-diacyl-sn-glycero-3-phospho-(1'-sn-glycerol) = an S-1,2-diacyl-sn-glyceryl-L-cysteinyl-[prolipoprotein] + sn-glycerol 1-phosphate + H(+). It participates in protein modification; lipoprotein biosynthesis (diacylglyceryl transfer). In terms of biological role, catalyzes the transfer of the diacylglyceryl group from phosphatidylglycerol to the sulfhydryl group of the N-terminal cysteine of a prolipoprotein, the first step in the formation of mature lipoproteins. The protein is Phosphatidylglycerol--prolipoprotein diacylglyceryl transferase of Vibrio campbellii (strain ATCC BAA-1116).